Consider the following 460-residue polypeptide: Proton extrusion protein PxcA (460 aa).

Residues 84 to 194 form a disordered region; that stretch reads RLPDPEQNGS…KTNLDNSNAP (111 aa). The segment covering 114 to 136 has biased composition (basic and acidic residues); that stretch reads NDGKDAENGRQSRDPSILEKLEF. Positions 167 to 194 are enriched in polar residues; it reads LTSSQPEPSDPSIKTNLAKTNLDNSNAP. Helical transmembrane passes span 242 to 262, 337 to 357, 373 to 393, and 420 to 440; these read FLLLLAILPLLVQIFSKHFLF, GLKNVLADVLSLLVFGWLILI, IYGLSDSAKAFIIILFTDVFV, and FIYGFIATFPVFLDTLFKYWI.

It belongs to the CemA family.

The protein resides in the cell inner membrane. Required for H(+) efflux immediately after light irradiation to form a rapid H(+) concentration gradient across the thylakoid membranes. Together with PxcL, contributes to transient H(+) uptake following dark to light transition. In Synechococcus sp. (strain JA-3-3Ab) (Cyanobacteria bacterium Yellowstone A-Prime), this protein is Proton extrusion protein PxcA.